The sequence spans 553 residues: Transcription factor MYB65 (553 aa).

Residues 1–44 form a disordered region; sequence MSYTTATADSDDGMHSSIHNESPAPDSISNGCRSRGKRSVLKKG. HTH myb-type domains follow at residues 38-90 and 91-145; these read RSVL…ANHL and RPNL…KRRQ. 2 DNA-binding regions (H-T-H motif) span residues 66 to 90 and 118 to 141; these read WNAV…ANHL and WAQM…NTRI.

In terms of tissue distribution, mostly expressed in roots (e.g. root tips), stems, pollen, shoot apices, flowers and floral shoot tips, and, to a lower extent, in leaves and siliques.

The protein resides in the nucleus. Functionally, transcriptional activator of alpha-amylase expression that binds to 5'-CAACTGTC-3' motif in target gene promoter. In vegetative tissues, inhibits growth by reducing cell proliferation. Promotes the expression of aleurone-related genes (e.g. CP1, CP, GASA1, BXL1 and BXL2) in seeds. Together with MYB33 and MYB101, promotes the programmed cell death (PCD) the vacuolation of protein storage vacuoles (PSVs) in the aleurone layers during seed germination. Together with MYB33, facilitates anther and tapetum development. The sequence is that of Transcription factor MYB65 from Arabidopsis thaliana (Mouse-ear cress).